The primary structure comprises 122 residues: C-C motif chemokine 9 (122 aa).

Residues 1–21 form the signal peptide; the sequence is MKPFHTALSFLILTTALGIWA. 3 cysteine pairs are disulfide-bonded: Cys57-Cys80, Cys58-Cys96, and Cys67-Cys107.

This sequence belongs to the intercrine beta (chemokine CC) family. In terms of processing, the N-terminal is proteolytically cleaved by proteases associated with inflammatory responses. The processed forms CCL9(29-101), CCL9(30-101) and CCL9(31-101) exhibit increase in CCR1-mediated signaling and chemotaxis assays in vitro. Expressed mainly in the liver, lung, and the thymus, although some expression has been detected in a wide variety of tissues except brain.

It localises to the secreted. In terms of biological role, monokine with inflammatory, pyrogenic and chemokinetic properties. Circulates at high concentrations in the blood of healthy animals. Binding to a high-affinity receptor activates calcium release in neutrophils. It also inhibits colony formation of bone marrow myeloid immature progenitors. The chain is C-C motif chemokine 9 (Ccl9) from Mus musculus (Mouse).